A 283-amino-acid chain; its full sequence is Elongation factor Ts (283 aa).

Residues 79–82 form an involved in Mg(2+) ion dislocation from EF-Tu region; the sequence is TDFV.

The protein belongs to the EF-Ts family.

The protein resides in the cytoplasm. Associates with the EF-Tu.GDP complex and induces the exchange of GDP to GTP. It remains bound to the aminoacyl-tRNA.EF-Tu.GTP complex up to the GTP hydrolysis stage on the ribosome. This Pseudoalteromonas translucida (strain TAC 125) protein is Elongation factor Ts.